Consider the following 311-residue polypeptide: Putative S-adenosyl-L-methionine-dependent methyltransferase MSMEG_0095/MSMEI_0092 (311 aa).

Residues aspartate 134 and 163 to 164 (DL) contribute to the S-adenosyl-L-methionine site.

The protein belongs to the UPF0677 family.

In terms of biological role, exhibits S-adenosyl-L-methionine-dependent methyltransferase activity. The polypeptide is Putative S-adenosyl-L-methionine-dependent methyltransferase MSMEG_0095/MSMEI_0092 (Mycolicibacterium smegmatis (strain ATCC 700084 / mc(2)155) (Mycobacterium smegmatis)).